A 1322-amino-acid chain; its full sequence is Serine/threonine-protein phosphatase UIS2 (1322 aa).

An N-terminal signal peptide occupies residues 1–22; the sequence is MNISKFFLIFIPLVLFKYPANN. Positions 1–535 are interaction with phosphorylated eIF2alpha; sequence MNISKFFLIF…NELKSTSNAM (535 aa). Basic and acidic residues-rich tracts occupy residues 267-279 and 288-326; these read EKSAEKYEDKELN and NSKKEQTGNDNVSETKMHKEESSDSSNKTDESNVCKSEN. Disordered regions lie at residues 267 to 326, 613 to 646, 1066 to 1087, and 1170 to 1196; these read EKSA…KSEN, NTNTDDKNQHNDISTTPINNYTDGNEGNNNSENN, NETPHNSNEILNTNENESIQPN, and EVPDESKEDDNTNSQPEDTIDQENKDD. Low complexity predominate over residues 631-646; that stretch reads NNYTDGNEGNNNSENN.

Mn(2+) serves as cofactor.

It catalyses the reaction O-phospho-L-seryl-[protein] + H2O = L-seryl-[protein] + phosphate. Functionally, protein phosphatase which dephosphorylates 'Ser-59' of translation factor eIF2alpha during the liver stage, thus enabling protein translation. The protein is Serine/threonine-protein phosphatase UIS2 of Plasmodium berghei (strain Anka).